Here is a 150-residue protein sequence, read N- to C-terminus: 3-dehydroquinate dehydratase (150 aa).

Tyrosine 26 (proton acceptor) is an active-site residue. Asparagine 77, histidine 83, and aspartate 90 together coordinate substrate. Histidine 103 acts as the Proton donor in catalysis. Residues 104–105 and arginine 114 each bind substrate; that span reads LS.

Belongs to the type-II 3-dehydroquinase family. Homododecamer.

It catalyses the reaction 3-dehydroquinate = 3-dehydroshikimate + H2O. It participates in metabolic intermediate biosynthesis; chorismate biosynthesis; chorismate from D-erythrose 4-phosphate and phosphoenolpyruvate: step 3/7. Its function is as follows. Catalyzes a trans-dehydration via an enolate intermediate. This chain is 3-dehydroquinate dehydratase, found in Sodalis glossinidius (strain morsitans).